The primary structure comprises 156 residues: uncharacterized protein (156 aa).

This is an uncharacterized protein from Acheta domesticus (House cricket).